The following is a 613-amino-acid chain: Phostensin (613 aa).

Positions 15-33 (RRQEEASVRGREKAERERL) are enriched in basic and acidic residues. 2 disordered regions span residues 15–231 (RRQE…SAYQ) and 266–505 (GEER…GKKR). A phosphoserine mark is found at S54, S125, S133, S175, and S195. Basic and acidic residues-rich tracts occupy residues 104–154 (RSEE…ERRL) and 167–191 (LEAR…EPWK). T199 is modified (phosphothreonine). Residues 199 to 221 (TPERSLRLAESREQSPRRKEVES) show a composition bias toward basic and acidic residues. S224 carries the phosphoserine modification. A compositionally biased stretch (basic and acidic residues) spans 266–282 (GEERQGYSEKCGRKEEW). Positions 301–310 (REAQGSSSTG) are enriched in polar residues. 3 stretches are compositionally biased toward basic and acidic residues: residues 314–327 (AEQR…RGMK), 340–350 (KAREWTPRDIE), and 357–367 (EPSESAEKRLE). A phosphoserine mark is found at S368 and S432. Over residues 424 to 446 (QPPPPAPLSPPPPAPTAPQPPGD) the composition is skewed to pro residues. K457 bears the N6-acetyllysine mark. A compositionally biased stretch (low complexity) spans 476–499 (PRRSVPPTTPATPTSPATADAAVP). Phosphoserine is present on residues S490 and S530. The interval 552–594 (QYPSESSVLEELGPEPEVPSAPNPPAAQPDDEEDEEELLLLQP) is disordered. Residues 567-578 (PEVPSAPNPPAA) show a composition bias toward pro residues. Residues 580–589 (PDDEEDEEEL) are compositionally biased toward acidic residues.

In terms of assembly, interacts with Protein phosphatase 1 (PP1).

Its subcellular location is the cytoplasm. The protein localises to the cytoskeleton. Functionally, may target protein phosphatase 1 to F-actin cytoskeleton. The sequence is that of Phostensin (PPP1R18) from Macaca mulatta (Rhesus macaque).